A 747-amino-acid polypeptide reads, in one-letter code: H(+)/Cl(-) exchange transporter 4 (747 aa).

The tract at residues 1-50 is required for localization in the endoplasmic reticulum; that stretch reads MDFLEEPFPDVGTYEDFHTIDWLREKSRDTDRHRKITSKSKESIWEFIKS. Residues 1 to 54 lie on the Cytoplasmic side of the membrane; it reads MDFLEEPFPDVGTYEDFHTIDWLREKSRDTDRHRKITSKSKESIWEFIKSLLDA. A run of 2 helical transmembrane segments spans residues 55 to 92 and 138 to 161; these read WSGWVVMLLIGLLAGTLAGVIDLAVDWMTDLKEGVCLS and LNYLMYILWALLFAFLAVSLVRVF. A Selectivity filter part_1 motif is present at residues 167–171; it reads GSGIP. Ser-168 contacts chloride. Residues 170-177 constitute an intramembrane region (helical); that stretch reads IPEIKTIL. Transmembrane regions (helical) follow at residues 187 to 205 and 211 to 230; these read GKWTLLIKTVTLVLVVSSG and EGPLVHVACCCGNFFSSLFS. A Selectivity filter part_2 motif is present at residues 209–213; the sequence is GKEGP. Intramembrane regions (helical) lie at residues 242–254 and 258–266; these read VLSAAAAAGVSVA and PIGGVLFSL. 5 helical membrane passes run 278–296, 320–345, 352–372, 429–449, and 454–473; these read LWRSFFAALVAAFTLRSIN, FPFILLGVFGGLWGTLFTRCNIAWCR, LGRYPVLEVIAVTAVTAIVAY, MWQLALALIFKIVITIFTFGM, and GLFIPSMAVGAMAGRMVGIG. The short motif at 454–458 is the Selectivity filter part_3 element; it reads GLFIP. Residue Phe-456 participates in chloride binding. 2 consecutive intramembrane regions (helical) follow at residues 501-515 and 519-530; these read GLYAMVGAAACLGGV and TVSLVVIMFELT. The note=Loop between two helices intramembrane region spans 531–534; that stretch reads GGLE. A helical transmembrane segment spans residues 535 to 553; the sequence is YIVPLMAAAVTSKWVADAF. The Cytoplasmic portion of the chain corresponds to 554-747; it reads GKEGIYEAHI…NQDPESIMFN (194 aa). Tyr-559 is a chloride binding site. CBS domains follow at residues 587-653 and 680-742; these read MRPR…QRQE and LRRI…QDPE. ATP-binding positions include Ser-597 and 618 to 620; that span reads YNG. Positions 654-683 are required for localization in the endoplasmic reticulum; the sequence is GIVSNSIMYFTEEPPELPANSPHPLKLRRI. 725–728 is an ATP binding site; the sequence is TKKD.

The protein belongs to the chloride channel (TC 2.A.49) family. ClC-4/CLCN4 subfamily. Predominantly present in excitable tissues such as nervous system and skeletal muscle. Not detected in heart.

The protein resides in the early endosome membrane. Its subcellular location is the late endosome membrane. It localises to the endoplasmic reticulum membrane. It is found in the lysosome membrane. The protein localises to the recycling endosome membrane. In terms of biological role, strongly outwardly rectifying, electrogenic H(+)/Cl(-)exchanger which mediates the exchange of chloride ions against protons. The CLC channel family contains both chloride channels and proton-coupled anion transporters that exchange chloride or another anion for protons. The presence of conserved gating glutamate residues is typical for family members that function as antiporters. This Mus musculus (Mouse) protein is H(+)/Cl(-) exchange transporter 4 (Clcn4).